The primary structure comprises 185 residues: Ribosome-recycling factor (185 aa).

The protein belongs to the RRF family.

It localises to the cytoplasm. In terms of biological role, responsible for the release of ribosomes from messenger RNA at the termination of protein biosynthesis. May increase the efficiency of translation by recycling ribosomes from one round of translation to another. In Rhodococcus erythropolis (strain PR4 / NBRC 100887), this protein is Ribosome-recycling factor.